A 141-amino-acid chain; its full sequence is Putative pre-16S rRNA nuclease (141 aa).

Belongs to the YqgF nuclease family.

The protein localises to the cytoplasm. Could be a nuclease involved in processing of the 5'-end of pre-16S rRNA. This Natranaerobius thermophilus (strain ATCC BAA-1301 / DSM 18059 / JW/NM-WN-LF) protein is Putative pre-16S rRNA nuclease.